A 504-amino-acid chain; its full sequence is 2,3-bisphosphoglycerate-independent phosphoglycerate mutase (504 aa).

Asp11 and Ser61 together coordinate Mn(2+). The active-site Phosphoserine intermediate is Ser61. Substrate contacts are provided by residues His122, 152 to 153 (RD), Arg183, Arg189, 255 to 258 (RNDR), and Lys329. Residues Asp396, His400, Asp437, His438, and His455 each coordinate Mn(2+).

It belongs to the BPG-independent phosphoglycerate mutase family. As to quaternary structure, monomer. It depends on Mn(2+) as a cofactor.

It carries out the reaction (2R)-2-phosphoglycerate = (2R)-3-phosphoglycerate. The protein operates within carbohydrate degradation; glycolysis; pyruvate from D-glyceraldehyde 3-phosphate: step 3/5. In terms of biological role, catalyzes the interconversion of 2-phosphoglycerate and 3-phosphoglycerate. The sequence is that of 2,3-bisphosphoglycerate-independent phosphoglycerate mutase from Bacteroides thetaiotaomicron (strain ATCC 29148 / DSM 2079 / JCM 5827 / CCUG 10774 / NCTC 10582 / VPI-5482 / E50).